The following is a 295-amino-acid chain: Threonine/homoserine exporter RhtA (295 aa).

Topologically, residues 1 to 7 are cytoplasmic; it reads MPGSTRK. Residues 8 to 28 traverse the membrane as a helical segment; it reads LPVWLPILVLLIAMSSIQSGA. At 29 to 38 the chain is on the periplasmic side; sequence SLAKSLFPLV. One can recognise an EamA 1 domain in the interval 30 to 135; that stretch reads LAKSLFPLVG…VLAVLGLWFL (106 aa). A helical transmembrane segment spans residues 39–59; that stretch reads GAPGVTALRLALGTLILIAFF. Residues 60 to 71 lie on the Cytoplasmic side of the membrane; that stretch reads KPWRLRFAKEQR. The chain crosses the membrane as a helical span at residues 72 to 92; it reads LPLLFYGLSLGGMNYLFYLSI. A topological domain (periplasmic) is located at residue Q93. Residues 94–114 form a helical membrane-spanning segment; it reads TVPLGIAVALEFTGPLAVALF. Over 115 to 118 the chain is Cytoplasmic; the sequence is SSRR. A helical transmembrane segment spans residues 119 to 139; the sequence is PVDFIWVVLAVLGLWFLLPLG. Residues 140 to 146 are Periplasmic-facing; that stretch reads QDMSHVD. The chain crosses the membrane as a helical span at residues 147–167; sequence LTGAALALGAGACWAVYILTG. One can recognise an EamA 2 domain in the interval 159-278; sequence CWAVYILTGQ…LCAIIAASMG (120 aa). At 168-175 the chain is on the cytoplasmic side; sequence QRAGAEHG. The chain crosses the membrane as a helical span at residues 176–196; it reads PATVAVGSLIAAIIFVPIGAV. Over 197-200 the chain is Periplasmic; that stretch reads QAGD. The chain crosses the membrane as a helical span at residues 201 to 221; sequence ALWHWSILPLGLAVAVLSTAL. The Cytoplasmic portion of the chain corresponds to 222 to 237; the sequence is PYSLEMIALTRLPTRT. A helical transmembrane segment spans residues 238–258; the sequence is FGTLMSMEPALAAVSGMIFLG. Topologically, residues 259-262 are periplasmic; the sequence is ETLT. The chain crosses the membrane as a helical span at residues 263–283; sequence GIQILALCAIIAASMGSTLTI. Topologically, residues 284–295 are cytoplasmic; it reads RREPQIKQVDVK.

It belongs to the drug/metabolite transporter (DMT) superfamily. 10 TMS drug/metabolite exporter (DME) (TC 2.A.7.3) family.

The protein resides in the cell inner membrane. Involved in the efflux of threonine and homoserine. This Salmonella typhimurium (strain SL1344) protein is Threonine/homoserine exporter RhtA (rhtA).